The chain runs to 218 residues: Oxygen regulatory protein NreC (218 aa).

One can recognise a Response regulatory domain in the interval 2–119 (KIVIADDHAV…QLILAVRTVY (118 aa)). A 4-aspartylphosphate modification is found at D53. The 66-residue stretch at 149-214 (SSDPFKILSK…ELVEYALKKK (66 aa)) folds into the HTH luxR-type domain. The H-T-H motif DNA-binding region spans 173-192 (NKDIAEKLFVSVKTVEAHKT).

In terms of processing, phosphorylated by NreB.

The protein resides in the cytoplasm. Functionally, member of the two-component regulatory system NreB/NreC involved in the control of dissimilatory nitrate/nitrite reduction in response to oxygen. Phosphorylated NreC binds to a GC-rich palindromic sequence at the promoters of the nitrate (narGHJI) and nitrite (nir) reductase operons, as well as the putative nitrate transporter gene narT, and activates their expression. This Staphylococcus epidermidis (strain ATCC 12228 / FDA PCI 1200) protein is Oxygen regulatory protein NreC (nreC).